Here is a 642-residue protein sequence, read N- to C-terminus: Voltage-gated potassium channel KCNC2 (642 aa).

The Cytoplasmic segment spans residues 1–233; it reads MGKIESNERV…EDPYSSRAAR (233 aa). Positions 45-98 are disordered; that stretch reads DCLTAAGDKLQPLPPPLSPPPRPPPLSPVPSGCFEGGAGNCSSHGGNGGNGGSD. The span at 56 to 72 shows a compositional bias: pro residues; sequence PLPPPLSPPPRPPPLSP. Residues 78–98 are compositionally biased toward gly residues; it reads FEGGAGNCSSHGGNGGNGGSD. 4 residues coordinate Zn(2+): histidine 128, cysteine 134, cysteine 155, and cysteine 156. The helical transmembrane segment at 234-254 threads the bilayer; it reads FIAFASLFFILVSITTFCLET. Residues asparagine 263 and asparagine 270 are each glycosylated (N-linked (GlcNAc...) asparagine). A helical membrane pass occupies residues 287 to 307; that stretch reads TYVEGVCVVWFTFEFLVRIVF. Topologically, residues 308–317 are cytoplasmic; the sequence is SPNKLEFIKN. The helical transmembrane segment at 318-338 threads the bilayer; sequence LLNIIDFVAILPFYLEVGLSG. A helical; Voltage-sensor membrane pass occupies residues 350–372; sequence FLRVVRFVRILRIFKLTRHFVGL. At 373 to 385 the chain is on the cytoplasmic side; the sequence is RVLGHTLRASTNE. The chain crosses the membrane as a helical span at residues 386–406; sequence FLLLIIFLALGVLIFATMIYY. Threonine 441, leucine 442, glycine 443, and tyrosine 444 together coordinate K(+). The Selectivity filter motif lies at 441–446; it reads TLGYGD. A helical membrane pass occupies residues 457–477; that stretch reads VGALCALAGVLTIAMPVPVIV. The Cytoplasmic segment spans residues 478-642; sequence NNFGMYYSLA…RSRSPIPSIL (165 aa). The disordered stretch occupies residues 542–576; that stretch reads SVLSGDDSTGSEPPLSPPERLPIRRSSTRDKNRRG. A Phosphoserine modification is found at serine 604.

It belongs to the potassium channel family. C (Shaw) (TC 1.A.1.2) subfamily. Kv3.2/KCNC2 sub-subfamily. As to quaternary structure, homotetramer and heterotetramer with other channel-forming alpha subunits, such as KCNC1. Interacts with KCNC1. Homotetramer or heterotetramer channel activity is regulated by association with modulating ancillary subunits such as KCNE1, KCNE2 and KCNE3, creating a functionally diverse range of channel complexes. Interacts with KCNE1, KCNE2 and KCNE3. Post-translationally, phosphorylated by PKA in cortical synaptosomes. cAMP-dependent phosphorylation inhibits channel activity. Histamine H2 receptor- and PKA-induced phosphorylation extends action potential spike duration, reduces action potential spike amplitude, sustains maximum firing frequency in hippocampal interneurons; also reduces the incidence of high-frequency oscillations in hippocampal CA3 pyramidal cell layers. In terms of tissue distribution, weakly expressed in the brain at postnatal age day 7 (P7) and increased at P60. Not detectable in newborn hippocampus. Expressed weakly at P7 in the early developing hippocampus, increasing progressively and reaching a plateau of expression at P14 that is maintained throughout P51. Expressed in paravalbumin- and somatostain-containing inhibitory interneurons of the hippocampus; in the CA1/CA3 stratum oriens-alveus and stratum pyramidale and in cells within the hilus and subgranular layer of the dentate gyrus (DG). Strongly expressed in parvalbumin (PV)-containing fast-spiking GABAergic inhibitor interneurons in deep cortical layers V and VI. Also expressed in non-fast-spiking calbindin (CB)- and/or somatostatin (SOM)-containing interneurons in deep cortical layers V and VI. Expressed in starburst amacrine cells of the retina in the inner nuclear layer (INL) and ganglion cell layer (GCL). Expressed in the suprachiasmatic nucleus (SCN) (at protein level). Expressed in the early developing brain, increasing progressively until P14.

Its subcellular location is the cell membrane. It is found in the membrane. The protein localises to the perikaryon. The protein resides in the cell projection. It localises to the axon. Its subcellular location is the dendrite. It is found in the postsynaptic cell membrane. The protein localises to the presynaptic cell membrane. The protein resides in the synapse. It localises to the synaptosome. Its subcellular location is the apical cell membrane. It is found in the basolateral cell membrane. The catalysed reaction is K(+)(in) = K(+)(out). With respect to regulation, inhibited by millimolar levels of tetraethylammonium (TEA). Contrary to other channels, inhibited only by millimolar levels of 4-aminopyridine (4-AP). Inhibited by Stichodactyla helianthus peptide ShK. In terms of biological role, voltage-gated potassium channel that mediates transmembrane potassium transport in excitable membranes, primarily in the brain. Contributes to the regulation of the fast action potential repolarization and in sustained high-frequency firing in neurons of the central nervous system. Homotetramer channels mediate delayed-rectifier voltage-dependent potassium currents that activate rapidly at high-threshold voltages and inactivate slowly. Forms tetrameric channels through which potassium ions pass in accordance with their electrochemical gradient. The channel alternates between opened and closed conformations in response to the voltage difference across the membrane. Can form functional homotetrameric and heterotetrameric channels that contain variable proportions of KCNC1, and possibly other family members as well; channel properties depend on the type of alpha subunits that are part of the channel. Channel properties may be modulated by either the association with ancillary subunits, such as KCNE1, KCNE2 and KCNE3 or indirectly by nitric oxide (NO) through a cGMP- and PKG-mediated signaling cascade, slowing channel activation and deactivation of delayed rectifier potassium channels. Contributes to fire sustained trains of very brief action potentials at high frequency in thalamocortical and suprachiasmatic nucleus (SCN) neurons, in hippocampal and neocortical interneurons and in retinal ganglion cells. Sustained maximal action potential firing frequency in inhibitory hippocampal interneurons is negatively modulated by histamine H2 receptor activation in a cAMP- and protein kinase (PKA) phosphorylation-dependent manner. Plays a role in maintaining the fidelity of synaptic transmission in neocortical GABAergic interneurons by generating action potential (AP) repolarization at nerve terminals, thus reducing spike-evoked calcium influx and GABA neurotransmitter release. Required for long-range synchronization of gamma oscillations over distance in the neocortex. Contributes to the modulation of the circadian rhythm of spontaneous action potential firing in suprachiasmatic nucleus (SCN) neurons in a light-dependent manner. The polypeptide is Voltage-gated potassium channel KCNC2 (Mus musculus (Mouse)).